A 133-amino-acid chain; its full sequence is Sigma factor-binding protein Crl (133 aa).

An essential for activity region spans residues 99-122 (TLDDFYVKLTKFVKEDCQLDLQAS).

It belongs to the Crl family.

Its subcellular location is the cytoplasm. Functionally, binds to the sigma-S subunit of RNA polymerase, activating expression of sigma-S-regulated genes. Stimulates RNA polymerase holoenzyme formation and may bind to several other sigma factors, such as sigma-70 and sigma-32. The polypeptide is Sigma factor-binding protein Crl (Photobacterium profundum (strain SS9)).